Consider the following 245-residue polypeptide: Bax inhibitor 1 (245 aa).

Topologically, residues 1-30 (MADTANYINDRFQTFMNGLGDRYEPYVREH) are cytoplasmic. The chain crosses the membrane as a helical span at residues 31–51 (LSKVYMVLGSTAAATAMGAML). Residues 52 to 55 (QMRD) are Lumenal-facing. The chain crosses the membrane as a helical span at residues 56–76 (FLDLGVLAAVATLVLVLGLHF). At 77 to 88 (YKDDGKNYYTRL) the chain is on the cytoplasmic side. The chain crosses the membrane as a helical span at residues 89–109 (GMLYAFGFCSGQTLGPLLGYI). The Lumenal segment spans residues 110 to 115 (CSINPA). Residues 116 to 136 (IILSALTGTFVTFISLSLSAL) traverse the membrane as a helical segment. Residues 137–142 (LAEQGK) are Cytoplasmic-facing. The helical transmembrane segment at 143–163 (YLYLGGMLVSVINTMALLSLF) threads the bilayer. The Lumenal portion of the chain corresponds to 164–169 (NMVFKS). Residues 170–190 (YFVQVTQLYVGVFVMAAFIVY) traverse the membrane as a helical segment. At 191 to 245 (DTQNIVEKCRNGNRDVVQHALDLFFDVLSMFRRLLIILTQKEERKQNERRQNKTK) the chain is on the cytoplasmic side.

This sequence belongs to the BI1 family.

The protein localises to the endoplasmic reticulum membrane. Suppressor of apoptosis. Modulates unfolded protein response signaling. Negatively regulates autophagy and autophagosome formation, especially during periods of nutrient deprivation, and reduces cell survival during starvation. In Drosophila melanogaster (Fruit fly), this protein is Bax inhibitor 1.